Reading from the N-terminus, the 343-residue chain is D-erythrose-4-phosphate dehydrogenase (343 aa).

12–13 (RI) contributes to the NAD(+) binding site. Substrate-binding positions include 154–156 (SCT), Arg200, 213–214 (TK), and Arg236. The active-site Nucleophile is Cys155. Asn318 serves as a coordination point for NAD(+).

It belongs to the glyceraldehyde-3-phosphate dehydrogenase family. Epd subfamily. As to quaternary structure, homotetramer.

Its subcellular location is the cytoplasm. The enzyme catalyses D-erythrose 4-phosphate + NAD(+) + H2O = 4-phospho-D-erythronate + NADH + 2 H(+). The protein operates within cofactor biosynthesis; pyridoxine 5'-phosphate biosynthesis; pyridoxine 5'-phosphate from D-erythrose 4-phosphate: step 1/5. Functionally, catalyzes the NAD-dependent conversion of D-erythrose 4-phosphate to 4-phosphoerythronate. This Pseudoalteromonas translucida (strain TAC 125) protein is D-erythrose-4-phosphate dehydrogenase.